Reading from the N-terminus, the 132-residue chain is Small ribosomal subunit protein uS8 (132 aa).

It belongs to the universal ribosomal protein uS8 family. Part of the 30S ribosomal subunit. Contacts proteins S5 and S12.

In terms of biological role, one of the primary rRNA binding proteins, it binds directly to 16S rRNA central domain where it helps coordinate assembly of the platform of the 30S subunit. In Geobacter sp. (strain M21), this protein is Small ribosomal subunit protein uS8.